Reading from the N-terminus, the 296-residue chain is Protoheme IX farnesyltransferase (296 aa).

The next 9 membrane-spanning stretches (helical) occupy residues 9 to 29, 36 to 56, 84 to 104, 108 to 128, 133 to 153, 163 to 183, 209 to 229, 234 to 254, and 265 to 285; these read VTKP…FLLA, YPLF…GCVF, AVSL…LWFG, LACW…SLYM, VYGT…GYCA, LILL…IAIF, ITLY…GGYA, LVVA…GYKV, and FGFS…DFMV.

Belongs to the UbiA prenyltransferase family. Protoheme IX farnesyltransferase subfamily.

The protein localises to the cell inner membrane. It catalyses the reaction heme b + (2E,6E)-farnesyl diphosphate + H2O = Fe(II)-heme o + diphosphate. The protein operates within porphyrin-containing compound metabolism; heme O biosynthesis; heme O from protoheme: step 1/1. Its function is as follows. Converts heme B (protoheme IX) to heme O by substitution of the vinyl group on carbon 2 of heme B porphyrin ring with a hydroxyethyl farnesyl side group. This chain is Protoheme IX farnesyltransferase, found in Citrobacter koseri (strain ATCC BAA-895 / CDC 4225-83 / SGSC4696).